Here is a 124-residue protein sequence, read N- to C-terminus: MILTMLKGKIHRATVTQAELNYVGSITIDKTLMEAAGILENEKVQIVDINNGARLETYVIPGKRESGVICLNGAAARLVQPGDKVIIIAYAQMNEDEARKYKPSVVFMNDDNTIKEITNYESNE.

The Schiff-base intermediate with substrate; via pyruvic acid role is filled by Ser-25. Ser-25 is modified (pyruvic acid (Ser)). Thr-57 is a binding site for substrate. Catalysis depends on Tyr-58, which acts as the Proton donor. 73 to 75 (GAA) serves as a coordination point for substrate.

Belongs to the PanD family. As to quaternary structure, heterooctamer of four alpha and four beta subunits. The cofactor is pyruvate. In terms of processing, is synthesized initially as an inactive proenzyme, which is activated by self-cleavage at a specific serine bond to produce a beta-subunit with a hydroxyl group at its C-terminus and an alpha-subunit with a pyruvoyl group at its N-terminus.

The protein resides in the cytoplasm. The catalysed reaction is L-aspartate + H(+) = beta-alanine + CO2. Its pathway is cofactor biosynthesis; (R)-pantothenate biosynthesis; beta-alanine from L-aspartate: step 1/1. In terms of biological role, catalyzes the pyruvoyl-dependent decarboxylation of aspartate to produce beta-alanine. The chain is Aspartate 1-decarboxylase from Clostridium beijerinckii (strain ATCC 51743 / NCIMB 8052) (Clostridium acetobutylicum).